A 401-amino-acid chain; its full sequence is MKILVLNAGSSSQKSCLYDLEFLPGHPPQPIWQAGIDWTVNPDYAVLTVKAQGIKQEINLSSQDRPAGIARMLDTLVTGETKVVANLADISIVGHRVVHGGTEYSQATMITPQVKETIKKLIPLAPSHNPAHLEGIEAIEQVLGDVPQVAVFDTAFHRSIPPESSLYPIPYQWSELGIRRYGFHGTSHQYCSQRAAELLGKPLESLKMVICHLGNGASLSAVKGGKSIDTTMGFTPLEGLMMGTRSGSIDPGILIYLEREYQYNPDSLNSLLNKESGLKGISGISGDMRAITTAMAEGNERAKLAFEMYIHRLKSLIGSMIASLEGLDVLVFTAGIGENSALVREKASQGWSFFGLELDLAKNAARPRDEDIASETSKVRVMVIATAEDWAIARECWHLSP.

Asparagine 7 serves as a coordination point for Mg(2+). ATP is bound at residue lysine 14. Arginine 96 contributes to the substrate binding site. Residue aspartate 153 is the Proton donor/acceptor of the active site. ATP contacts are provided by residues 212 to 216 (HLGNG), 287 to 289 (DMR), and 335 to 339 (GIGEN). Glutamate 388 contacts Mg(2+).

This sequence belongs to the acetokinase family. Homodimer. Mg(2+) serves as cofactor. The cofactor is Mn(2+).

Its subcellular location is the cytoplasm. It catalyses the reaction acetate + ATP = acetyl phosphate + ADP. Its pathway is metabolic intermediate biosynthesis; acetyl-CoA biosynthesis; acetyl-CoA from acetate: step 1/2. Functionally, catalyzes the formation of acetyl phosphate from acetate and ATP. Can also catalyze the reverse reaction. In Microcystis aeruginosa (strain NIES-843 / IAM M-2473), this protein is Acetate kinase.